A 545-amino-acid chain; its full sequence is Chaperonin GroEL 2 (545 aa).

ATP contacts are provided by residues 30–33 (TLGP), lysine 51, 87–91 (DGTTT), glycine 415, and aspartate 496.

This sequence belongs to the chaperonin (HSP60) family. As to quaternary structure, forms a cylinder of 14 subunits composed of two heptameric rings stacked back-to-back. Interacts with the co-chaperonin GroES.

It is found in the cytoplasm. The catalysed reaction is ATP + H2O + a folded polypeptide = ADP + phosphate + an unfolded polypeptide.. Its function is as follows. Together with its co-chaperonin GroES, plays an essential role in assisting protein folding. The GroEL-GroES system forms a nano-cage that allows encapsulation of the non-native substrate proteins and provides a physical environment optimized to promote and accelerate protein folding. The sequence is that of Chaperonin GroEL 2 from Nitrobacter winogradskyi (strain ATCC 25391 / DSM 10237 / CIP 104748 / NCIMB 11846 / Nb-255).